A 360-amino-acid polypeptide reads, in one-letter code: UDP-N-acetylglucosamine--N-acetylmuramyl-(pentapeptide) pyrophosphoryl-undecaprenol N-acetylglucosamine transferase (360 aa).

Positions 198 and 289 each coordinate UDP-N-acetyl-alpha-D-glucosamine.

Belongs to the glycosyltransferase 28 family. MurG subfamily.

It is found in the cell membrane. It carries out the reaction Mur2Ac(oyl-L-Ala-gamma-D-Glu-L-Lys-D-Ala-D-Ala)-di-trans,octa-cis-undecaprenyl diphosphate + UDP-N-acetyl-alpha-D-glucosamine = beta-D-GlcNAc-(1-&gt;4)-Mur2Ac(oyl-L-Ala-gamma-D-Glu-L-Lys-D-Ala-D-Ala)-di-trans,octa-cis-undecaprenyl diphosphate + UDP + H(+). The protein operates within cell wall biogenesis; peptidoglycan biosynthesis. Cell wall formation. Catalyzes the transfer of a GlcNAc subunit on undecaprenyl-pyrophosphoryl-MurNAc-pentapeptide (lipid intermediate I) to form undecaprenyl-pyrophosphoryl-MurNAc-(pentapeptide)GlcNAc (lipid intermediate II). This chain is UDP-N-acetylglucosamine--N-acetylmuramyl-(pentapeptide) pyrophosphoryl-undecaprenol N-acetylglucosamine transferase, found in Streptococcus pyogenes serotype M6 (strain ATCC BAA-946 / MGAS10394).